A 200-amino-acid chain; its full sequence is Protein GrpE (200 aa).

Residues 1 to 23 (MEEEIKETSEDKEEENTEAEAVE) are compositionally biased toward acidic residues. A disordered region spans residues 1 to 39 (MEEEIKETSEDKEEENTEAEAVENNEKSEENAGNVEEDE).

The protein belongs to the GrpE family. In terms of assembly, homodimer.

Its subcellular location is the cytoplasm. Participates actively in the response to hyperosmotic and heat shock by preventing the aggregation of stress-denatured proteins, in association with DnaK and GrpE. It is the nucleotide exchange factor for DnaK and may function as a thermosensor. Unfolded proteins bind initially to DnaJ; upon interaction with the DnaJ-bound protein, DnaK hydrolyzes its bound ATP, resulting in the formation of a stable complex. GrpE releases ADP from DnaK; ATP binding to DnaK triggers the release of the substrate protein, thus completing the reaction cycle. Several rounds of ATP-dependent interactions between DnaJ, DnaK and GrpE are required for fully efficient folding. This is Protein GrpE from Brachyspira hyodysenteriae (strain ATCC 49526 / WA1).